A 588-amino-acid chain; its full sequence is Pescadillo homolog (588 aa).

Residues 1 to 54 (MGGLEKKKYERGSATNYITRNKARKKLQLSLADFRRLCILKGIYPHEPKHKKKV) are required for 28S ribosomal RNA processing. The interval 1–257 (MGGLEKKKYE…PKLEGQAQAE (257 aa)) is sufficient for nucleolar localization. Lys98 carries the N6-acetyllysine modification. The disordered stretch occupies residues 294-314 (EAEVDEFPTDGEMSAQEEDRR). The segment at 306 to 415 (MSAQEEDRRK…LLLPVAEYFS (110 aa)) is sufficient for interaction with MAP1B. A BRCT domain is found at 322–415 (KHKKLFEGLK…LLLPVAEYFS (94 aa)). Residues 448–515 (GEDPGNLNES…GKKPRVMAGT (68 aa)) form a disordered region. Over residues 456-486 (ESEEEEEEDDNNEGDGDEEGENEEEEEDAEA) the composition is skewed to acidic residues. The segment covering 487-508 (GSEKEEEARLAALEEQRMEGKK) has biased composition (basic and acidic residues). Residue Lys517 forms a Glycyl lysine isopeptide (Lys-Gly) (interchain with G-Cter in SUMO1); alternate linkage. A Glycyl lysine isopeptide (Lys-Gly) (interchain with G-Cter in SUMO2); alternate cross-link involves residue Lys517. The required for 28S ribosomal RNA processing stretch occupies residues 539-588 (MMKKREKYLYQKIMFGKRRKIREANKLAEKRKAHDEAVRSEKKAKKARPE). Residues 565–588 (LAEKRKAHDEAVRSEKKAKKARPE) are disordered.

This sequence belongs to the pescadillo family. Component of the PeBoW complex, composed of BOP1, PES1 and WDR12. The complex is held together by BOP1, which interacts with PES1 via its N-terminal domain and with WDR12 via a high-affinity interaction between the seven-bladed beta-propeller domains of the 2 proteins. The PeBoW complex associates with the 66S pre-ribosome. The PeBoW complex also associates with DDX27, PES1 interacts directly with DDX27. Interacts with IRS1 and UBTF. May interact with MAP1B. In terms of processing, sumoylated. Significant levels are detected in a variety of cancer cell lines, including glioblastoma, breast carcinoma, colon carcinoma and cervical carcinoma cells. Levels are abnormally elevated in malignant tumors of astrocytic origin.

It localises to the nucleus. It is found in the nucleolus. Its subcellular location is the nucleoplasm. The protein resides in the chromosome. Functionally, component of the PeBoW complex, which is required for maturation of 28S and 5.8S ribosomal RNAs and formation of the 60S ribosome. The polypeptide is Pescadillo homolog (Homo sapiens (Human)).